The following is a 131-amino-acid chain: Beta/delta-urticatoxin-Dm2a (131 aa).

The N-terminal stretch at 1 to 24 is a signal peptide; the sequence is MKSSATVVLLVAAVTAAMVMSSSA. A propeptide spanning residues 25–69 is cleaved from the precursor; it reads SGDAVMIDEHNNIMTSVEGKRGIGSSVVANGGNRKMANVLLSGWE. 6 disulfide bridges follow: Cys-72-Cys-88, Cys-79-Cys-93, Cys-87-Cys-101, Cys-103-Cys-117, Cys-110-Cys-122, and Cys-116-Cys-130.

This sequence belongs to the urticatoxin-2 family. As to expression, expressed in trichomes, that are stiff epidermal hairs located on the surface of petioles and leaves.

It localises to the secreted. Its function is as follows. Plant defense neurotoxin that causes pain and systemic symptoms in mammals via modulation of voltage-gated sodium channels (Nav). Potent modulator of human Nav1.5/SCN5A (EC(50)=55 nM), Nav1.6/SCN8A (EC(50)=0.86 nM), and Nav1.7/SCN9A (EC(50)=208 nM), where it shifts the activation threshold to more negative potentials and delays fast inactivation. Also shifts the voltage-dependence of steady-state fast inactivation of Nav1.6/SCN8A, but not that of Nav1.5/SCN5A or Nav1.7/SCN9A. On Nav1.7/SCN9A, principally acts by binding to extracellular loops of domain IV (Nav site 3). In vivo, intraplantar injection into mice causes numerous dose-dependent, immediate, and long-lasting spontaneous pain behaviors, while no swelling is observed in the injected paw. At the highest doses tested, systemic symptoms including hypokinesia and hypersalivation are observed. The sequence is that of Beta/delta-urticatoxin-Dm2a from Dendrocnide moroides (Gympie stinging tree).